The following is a 258-amino-acid chain: C4b-binding protein beta chain (258 aa).

The N-terminal stretch at 1 to 15 (MLCLVVCCLIWLISA) is a signal peptide. In terms of domain architecture, Sushi 1; atypical; lacks a Cys spans 18–75 (GSCSEPPPVNNSVFVGKETEEQILGIYLCIKGYHLVGKKSLVFDPSKEWNSTLPECLL). 5 N-linked (GlcNAc...) asparagine glycosylation sites follow: Asn-27, Asn-67, Asn-89, Asn-95, and Asn-114. 5 cysteine pairs are disulfide-bonded: Cys-46–Cys-73, Cys-78–Cys-118, Cys-104–Cys-131, Cys-136–Cys-176, and Cys-162–Cys-188. Sushi domains are found at residues 76–133 (GHCP…ICRS) and 134–190 (RDCE…TCES). Residue Asn-218 is glycosylated (N-linked (GlcNAc...) asparagine).

In terms of assembly, disulfide-linked complex of alpha and beta chains.

It is found in the secreted. Functionally, controls the classical pathway of complement activation. It binds as a cofactor to C3b/C4b inactivator (C3bINA), which then hydrolyzes the complement fragment C4b. It also accelerates the degradation of the C4bC2a complex (C3 convertase) by dissociating the complement fragment C2a. It also interacts with anticoagulant protein S and with serum amyloid P component. The polypeptide is C4b-binding protein beta chain (C4bpb) (Rattus norvegicus (Rat)).